The chain runs to 59 residues: MSCPKCGSGNIAKEKTMRGWSDDYVCCDCGYNDSKDAFGERGKNEFVRINKERKGNEKS.

This Salmonella phage P22 (Bacteriophage P22) protein is Eag protein (eag).